Consider the following 227-residue polypeptide: Glutathione S-transferase U13 (227 aa).

The region spanning 5–86 (DTVKLIGSWS…YVDEAWPSVP (82 aa)) is the GST N-terminal domain. Residues 15–16 (SP), 43–44 (EK), 57–58 (KV), and 70–71 (ES) contribute to the glutathione site. One can recognise a GST C-terminal domain in the interval 92–224 (DAYDRASARF…EVVAFAKQKF (133 aa)). Phosphothreonine is present on Thr-158.

Belongs to the GST superfamily. Tau family.

The protein localises to the cytoplasm. It localises to the cytosol. The enzyme catalyses RX + glutathione = an S-substituted glutathione + a halide anion + H(+). Its function is as follows. In vitro, possesses glutathione S-transferase activity toward 1-chloro-2,4-dinitrobenzene (CDNB) and benzyl isothiocyanate (BITC). May be involved in the conjugation of reduced glutathione to a wide number of exogenous and endogenous hydrophobic electrophiles and have a detoxification role against certain herbicides. This Arabidopsis thaliana (Mouse-ear cress) protein is Glutathione S-transferase U13 (GSTU13).